A 360-amino-acid chain; its full sequence is Phospho-N-acetylmuramoyl-pentapeptide-transferase (360 aa).

10 consecutive transmembrane segments (helical) span residues 26 to 46 (AILG…WVIN), 70 to 90 (GTPT…TLLW), 97 to 117 (YVLA…VDDY), 134 to 154 (YFWQ…TAQI), 167 to 187 (GVAL…VVGF), 199 to 219 (GLAI…AYLV), 236 to 256 (AGEL…FLWF), 263 to 283 (VFMG…IAVI), 288 to 308 (IVFI…ILQV), and 338 to 358 (VIVR…ATLK).

This sequence belongs to the glycosyltransferase 4 family. MraY subfamily. Mg(2+) serves as cofactor.

Its subcellular location is the cell inner membrane. It catalyses the reaction UDP-N-acetyl-alpha-D-muramoyl-L-alanyl-gamma-D-glutamyl-meso-2,6-diaminopimeloyl-D-alanyl-D-alanine + di-trans,octa-cis-undecaprenyl phosphate = di-trans,octa-cis-undecaprenyl diphospho-N-acetyl-alpha-D-muramoyl-L-alanyl-D-glutamyl-meso-2,6-diaminopimeloyl-D-alanyl-D-alanine + UMP. The protein operates within cell wall biogenesis; peptidoglycan biosynthesis. In terms of biological role, catalyzes the initial step of the lipid cycle reactions in the biosynthesis of the cell wall peptidoglycan: transfers peptidoglycan precursor phospho-MurNAc-pentapeptide from UDP-MurNAc-pentapeptide onto the lipid carrier undecaprenyl phosphate, yielding undecaprenyl-pyrophosphoryl-MurNAc-pentapeptide, known as lipid I. The sequence is that of Phospho-N-acetylmuramoyl-pentapeptide-transferase from Saccharophagus degradans (strain 2-40 / ATCC 43961 / DSM 17024).